The following is a 186-amino-acid chain: Single-stranded DNA-binding protein 1 (186 aa).

Residues 1 to 108 enclose the SSB domain; the sequence is MDATVTVVGN…LEIDEIGPTL (108 aa). Positions 120 to 186 are disordered; sequence QAGHGVSPDP…EDFDSDEVPF (67 aa). The span at 132-141 shows a compositional bias: polar residues; it reads DSQTGQGIDS. Residues 175 to 186 are compositionally biased toward acidic residues; sequence SYEDFDSDEVPF.

In terms of assembly, homotetramer.

The polypeptide is Single-stranded DNA-binding protein 1 (ssb1) (Tropheryma whipplei (strain TW08/27) (Whipple's bacillus)).